The chain runs to 276 residues: 4-hydroxy-tetrahydrodipicolinate reductase (276 aa).

16–21 (GALGKM) is a binding site for NAD(+). K44 provides a ligand contact to NADP(+). Residues 109–111 (GTT) and 135–138 (APNF) contribute to the NAD(+) site. The active-site Proton donor/acceptor is H165. H166 provides a ligand contact to (S)-2,3,4,5-tetrahydrodipicolinate. K169 serves as the catalytic Proton donor. 175–176 (GT) serves as a coordination point for (S)-2,3,4,5-tetrahydrodipicolinate.

Belongs to the DapB family.

It localises to the cytoplasm. The catalysed reaction is (S)-2,3,4,5-tetrahydrodipicolinate + NAD(+) + H2O = (2S,4S)-4-hydroxy-2,3,4,5-tetrahydrodipicolinate + NADH + H(+). The enzyme catalyses (S)-2,3,4,5-tetrahydrodipicolinate + NADP(+) + H2O = (2S,4S)-4-hydroxy-2,3,4,5-tetrahydrodipicolinate + NADPH + H(+). The protein operates within amino-acid biosynthesis; L-lysine biosynthesis via DAP pathway; (S)-tetrahydrodipicolinate from L-aspartate: step 4/4. Its function is as follows. Catalyzes the conversion of 4-hydroxy-tetrahydrodipicolinate (HTPA) to tetrahydrodipicolinate. The protein is 4-hydroxy-tetrahydrodipicolinate reductase of Thermosynechococcus vestitus (strain NIES-2133 / IAM M-273 / BP-1).